The chain runs to 156 residues: Small ribosomal subunit protein uS7 (156 aa).

The protein belongs to the universal ribosomal protein uS7 family. Part of the 30S ribosomal subunit. Contacts proteins S9 and S11.

Functionally, one of the primary rRNA binding proteins, it binds directly to 16S rRNA where it nucleates assembly of the head domain of the 30S subunit. Is located at the subunit interface close to the decoding center, probably blocks exit of the E-site tRNA. The sequence is that of Small ribosomal subunit protein uS7 from Treponema pallidum (strain Nichols).